We begin with the raw amino-acid sequence, 176 residues long: uncharacterized protein (176 aa).

Residues 87–100 (ASASSQLRASRVQS) show a composition bias toward low complexity. Residues 87–109 (ASASSQLRASRVQSGTRQSARAG) form a disordered region.

This is an uncharacterized protein from Homo sapiens (Human).